Reading from the N-terminus, the 811-residue chain is MKLTPMMQQYMDIKSKYKDAILLFRLGDFYEAFFEDAEIVSKTLDLVLTHRQDAPMAGVPYHALNTYLKKLVQFGYKVAICDQVEDPSTAKGLVKREVTRIVTPGTVLEDDLLDQNSNNYLVAICRKSEYSVAGVDISTGESFVVSFKDFQSMIDFLGSVKVSQVLCEPDLRQDLEKNLADIMIESLADWHLDDALLEKDIAEVFKVSDIDHLELGSNLKVFGALVRYLRYTLMSPCTLVKPPRIIRDQMYVFLDPATIEHLSLVGGEKGKNLFDVLNHTKTSMGSRLLKNWILQPLRDLYEINKRLDKVQAFVEDSILLNEIREYLQAVRDIQRIANRINYGKASVKDLVALRSTLQVCPYIKEVLLTNEAFPEAAMVDCLHDICEILNDAIKEEPSSVIGEGKVIKEGYDEQLDQLRELVYHSQEFLNNFEQRERDRTGIPNLRVGYNSVFGYYIEITKSHLSKIPPNYVRKQTLVNAERFITDELKEFEQKMLTAKENLERREKEIYDEICASLSSKVGLIIELAEFLAQIDVLSTLAYVAIRYGYTKPSFSNDGKLLLRNSRHPVVERLVDTFVPNDLEMDRTKNFIILTGPNMSGKSTFIRQVALVSIMAQMGSFVPADEAILPVFDRIFAKMGIRDDIASGKSTFLIEMNEVAKIVYQATENSLILLDEVGRGTSTFDGISIAWAVSEYLQNQISCKCIFATHFTELTELAKMYDGIVNKTVQVIEEKNQVIFLHRVVDGIADRSYGIEVAGIAGLPGEIIQRAREVLDVIANKSELEDKLRVISSEKLKKLKKKKVHPNQAQLW.

An ATP-binding site is contributed by 595–602; it reads GPNMSGKS.

The protein belongs to the DNA mismatch repair MutS family.

Its function is as follows. This protein is involved in the repair of mismatches in DNA. It is possible that it carries out the mismatch recognition step. This protein has a weak ATPase activity. The sequence is that of DNA mismatch repair protein MutS from Pseudothermotoga lettingae (strain ATCC BAA-301 / DSM 14385 / NBRC 107922 / TMO) (Thermotoga lettingae).